A 437-amino-acid chain; its full sequence is Probable N-acetylmuramidase (437 aa).

The N-terminal stretch at 1–57 (MPVSRVKVKNRHLKKKTKKPLAFYKPATKFAGAVLIAGTLTTTHELLLQQTSPMVQA) is a signal peptide. 3 disordered regions span residues 217 to 244 (SSAG…SSTT), 290 to 320 (ASST…SQTT), and 367 to 392 (AASN…NSNA). The region spanning 243-286 (TTYTVKSGDTLWGISQRYGISVAQIQSANNLKSTIIYIGQKLVL) is the LysM 1 domain. A compositionally biased stretch (low complexity) spans 290–317 (ASSTNSGGSNNSASTTPTTSVTPAKPTS). The LysM 2 domain maps to 319 to 362 (TTVKVKSGDTLWALSVKYKTSIAQLKSWNHLSSDTIYIGQNLIV). Positions 393–436 (SIHKVVKGDTLWGLSQKSGSPIASIKAWNHLSSDTILIGQYLRI) constitute a LysM 3 domain.

It belongs to the glycosyl hydrolase 73 family.

It localises to the secreted. It carries out the reaction Hydrolysis of (1-&gt;4)-beta-linkages between N-acetylmuramic acid and N-acetyl-D-glucosamine residues in a peptidoglycan and between N-acetyl-D-glucosamine residues in chitodextrins.. Its function is as follows. Hydrolyzes the cell wall of L.lactis and M.lysodeikticus. Required for cell separation during growth. This is Probable N-acetylmuramidase (acmA) from Lactococcus lactis subsp. cremoris (strain MG1363).